The following is a 597-amino-acid chain: Elongation factor 4 (597 aa).

The region spanning 2–184 (DHIRNFSIIA…ALIAKVPPPK (183 aa)) is the tr-type G domain. Residues 14–19 (DHGKST) and 131–134 (NKID) contribute to the GTP site.

It belongs to the TRAFAC class translation factor GTPase superfamily. Classic translation factor GTPase family. LepA subfamily.

Its subcellular location is the cell inner membrane. The catalysed reaction is GTP + H2O = GDP + phosphate + H(+). Its function is as follows. Required for accurate and efficient protein synthesis under certain stress conditions. May act as a fidelity factor of the translation reaction, by catalyzing a one-codon backward translocation of tRNAs on improperly translocated ribosomes. Back-translocation proceeds from a post-translocation (POST) complex to a pre-translocation (PRE) complex, thus giving elongation factor G a second chance to translocate the tRNAs correctly. Binds to ribosomes in a GTP-dependent manner. This chain is Elongation factor 4, found in Cupriavidus pinatubonensis (strain JMP 134 / LMG 1197) (Cupriavidus necator (strain JMP 134)).